Reading from the N-terminus, the 212-residue chain is Tubulin alpha chain (212 aa).

2 residues coordinate GTP: Asn-3 and Asn-25. The active site involves Glu-51.

It belongs to the tubulin family. As to quaternary structure, dimer of alpha and beta chains. A typical microtubule is a hollow water-filled tube with an outer diameter of 25 nm and an inner diameter of 15 nM. Alpha-beta heterodimers associate head-to-tail to form protofilaments running lengthwise along the microtubule wall with the beta-tubulin subunit facing the microtubule plus end conferring a structural polarity. Microtubules usually have 13 protofilaments but different protofilament numbers can be found in some organisms and specialized cells. It depends on Mg(2+) as a cofactor.

It is found in the cytoplasm. It localises to the cytoskeleton. It catalyses the reaction GTP + H2O = GDP + phosphate + H(+). In terms of biological role, tubulin is the major constituent of microtubules, a cylinder consisting of laterally associated linear protofilaments composed of alpha- and beta-tubulin heterodimers. Microtubules grow by the addition of GTP-tubulin dimers to the microtubule end, where a stabilizing cap forms. Below the cap, tubulin dimers are in GDP-bound state, owing to GTPase activity of alpha-tubulin. In Pneumocystis carinii, this protein is Tubulin alpha chain (TUB-A).